The following is a 254-amino-acid chain: PF03932 family protein CutC (254 aa).

Belongs to the CutC family.

The protein resides in the cytoplasm. The polypeptide is PF03932 family protein CutC (Yersinia pestis bv. Antiqua (strain Antiqua)).